We begin with the raw amino-acid sequence, 298 residues long: Protease HtpX homolog (298 aa).

The next 2 membrane-spanning stretches (helical) occupy residues 15-35 and 38-58; these read LIMV…GYLF and SPWT…LIMW. Residue His-143 coordinates Zn(2+). Glu-144 is a catalytic residue. His-147 serves as a coordination point for Zn(2+). The next 2 helical transmembrane spans lie at 153-173 and 197-217; these read ILLS…SGIA and IIFK…SASL. Residue Glu-227 participates in Zn(2+) binding.

It belongs to the peptidase M48B family. The cofactor is Zn(2+).

It localises to the cell membrane. The protein is Protease HtpX homolog of Lactobacillus acidophilus (strain ATCC 700396 / NCK56 / N2 / NCFM).